Reading from the N-terminus, the 104-residue chain is Glutaredoxin-C15 (104 aa).

In terms of domain architecture, Glutaredoxin spans 1 to 103; the sequence is MERVAKLSTE…PMLKAAGAIW (103 aa). Cysteine 21 and cysteine 24 are oxidised to a cystine.

This sequence belongs to the glutaredoxin family. CC-type subfamily.

The protein resides in the cytoplasm. Has a glutathione-disulfide oxidoreductase activity in the presence of NADPH and glutathione reductase. Reduces low molecular weight disulfides and proteins. This Oryza sativa subsp. japonica (Rice) protein is Glutaredoxin-C15 (GRXC15).